A 223-amino-acid chain; its full sequence is ATP phosphoribosyltransferase (223 aa).

Belongs to the ATP phosphoribosyltransferase family. Short subfamily. Heteromultimer composed of HisG and HisZ subunits.

The protein localises to the cytoplasm. It carries out the reaction 1-(5-phospho-beta-D-ribosyl)-ATP + diphosphate = 5-phospho-alpha-D-ribose 1-diphosphate + ATP. It functions in the pathway amino-acid biosynthesis; L-histidine biosynthesis; L-histidine from 5-phospho-alpha-D-ribose 1-diphosphate: step 1/9. Catalyzes the condensation of ATP and 5-phosphoribose 1-diphosphate to form N'-(5'-phosphoribosyl)-ATP (PR-ATP). Has a crucial role in the pathway because the rate of histidine biosynthesis seems to be controlled primarily by regulation of HisG enzymatic activity. This chain is ATP phosphoribosyltransferase, found in Halothermothrix orenii (strain H 168 / OCM 544 / DSM 9562).